Reading from the N-terminus, the 430-residue chain is Adenylosuccinate synthetase (430 aa).

GTP-binding positions include 12 to 18 (GDEGKGK) and 40 to 42 (GHT). Asp-13 (proton acceptor) is an active-site residue. 2 residues coordinate Mg(2+): Asp-13 and Gly-40. Residues 13 to 16 (DEGK), 38 to 41 (NAGH), Thr-130, Arg-144, Gln-224, Thr-239, and Arg-303 contribute to the IMP site. The active-site Proton donor is the His-41. Residue 299 to 305 (TNTGRPR) coordinates substrate. Residues Arg-305, 331 to 333 (KLD), and 413 to 415 (STS) contribute to the GTP site.

Belongs to the adenylosuccinate synthetase family. As to quaternary structure, homodimer. It depends on Mg(2+) as a cofactor.

It localises to the cytoplasm. The catalysed reaction is IMP + L-aspartate + GTP = N(6)-(1,2-dicarboxyethyl)-AMP + GDP + phosphate + 2 H(+). It participates in purine metabolism; AMP biosynthesis via de novo pathway; AMP from IMP: step 1/2. In terms of biological role, plays an important role in the de novo pathway of purine nucleotide biosynthesis. Catalyzes the first committed step in the biosynthesis of AMP from IMP. This chain is Adenylosuccinate synthetase, found in Rhodopseudomonas palustris (strain HaA2).